The following is a 62-amino-acid chain: Large ribosomal subunit protein bL28 (62 aa).

The protein belongs to the bacterial ribosomal protein bL28 family.

The polypeptide is Large ribosomal subunit protein bL28 (Syntrophomonas wolfei subsp. wolfei (strain DSM 2245B / Goettingen)).